A 601-amino-acid chain; its full sequence is Elongation factor 4 (601 aa).

The region spanning 7 to 189 is the tr-type G domain; the sequence is KNIRNFSIVA…AIVTRLPPPQ (183 aa). GTP-binding positions include 19–24 and 136–139; these read DHGKST and NKID.

Belongs to the TRAFAC class translation factor GTPase superfamily. Classic translation factor GTPase family. LepA subfamily.

The protein resides in the cell inner membrane. It catalyses the reaction GTP + H2O = GDP + phosphate + H(+). Its function is as follows. Required for accurate and efficient protein synthesis under certain stress conditions. May act as a fidelity factor of the translation reaction, by catalyzing a one-codon backward translocation of tRNAs on improperly translocated ribosomes. Back-translocation proceeds from a post-translocation (POST) complex to a pre-translocation (PRE) complex, thus giving elongation factor G a second chance to translocate the tRNAs correctly. Binds to ribosomes in a GTP-dependent manner. This Methylocella silvestris (strain DSM 15510 / CIP 108128 / LMG 27833 / NCIMB 13906 / BL2) protein is Elongation factor 4.